Reading from the N-terminus, the 930-residue chain is Isoleucine--tRNA ligase (930 aa).

The 'HIGH' region signature appears at 57–67 (PYANGNIHVGH). Residue Glu554 participates in L-isoleucyl-5'-AMP binding. The 'KMSKS' region signature appears at 595 to 599 (KMSKS). Residue Lys598 coordinates ATP. 4 residues coordinate Zn(2+): Cys888, Cys891, Cys908, and Cys911.

It belongs to the class-I aminoacyl-tRNA synthetase family. IleS type 1 subfamily. Monomer. Zn(2+) is required as a cofactor.

The protein localises to the cytoplasm. The enzyme catalyses tRNA(Ile) + L-isoleucine + ATP = L-isoleucyl-tRNA(Ile) + AMP + diphosphate. In terms of biological role, catalyzes the attachment of isoleucine to tRNA(Ile). As IleRS can inadvertently accommodate and process structurally similar amino acids such as valine, to avoid such errors it has two additional distinct tRNA(Ile)-dependent editing activities. One activity is designated as 'pretransfer' editing and involves the hydrolysis of activated Val-AMP. The other activity is designated 'posttransfer' editing and involves deacylation of mischarged Val-tRNA(Ile). This Streptococcus pneumoniae (strain CGSP14) protein is Isoleucine--tRNA ligase.